The following is a 628-amino-acid chain: Chaperone protein HtpG (628 aa).

An a; substrate-binding region spans residues 1-337 (MSEKKYTFET…SADLPLNVSR (337 aa)). The b stretch occupies residues 338-554 (EILQHNKVID…DYGMSLHMQK (217 aa)). Residues 555-628 (MMEEAGQSFM…FVKLVNKYIR (74 aa)) are c.

The protein belongs to the heat shock protein 90 family. As to quaternary structure, homodimer.

The protein localises to the cytoplasm. Functionally, molecular chaperone. Has ATPase activity. The protein is Chaperone protein HtpG of Francisella tularensis subsp. tularensis (strain FSC 198).